A 578-amino-acid chain; its full sequence is Isocitrate dehydrogenase kinase/phosphatase (578 aa).

Residues 315-321 (APGIRGM) and lysine 336 contribute to the ATP site. The active site involves aspartate 371.

This sequence belongs to the AceK family.

It is found in the cytoplasm. The enzyme catalyses L-seryl-[isocitrate dehydrogenase] + ATP = O-phospho-L-seryl-[isocitrate dehydrogenase] + ADP + H(+). Its function is as follows. Bifunctional enzyme which can phosphorylate or dephosphorylate isocitrate dehydrogenase (IDH) on a specific serine residue. This is a regulatory mechanism which enables bacteria to bypass the Krebs cycle via the glyoxylate shunt in response to the source of carbon. When bacteria are grown on glucose, IDH is fully active and unphosphorylated, but when grown on acetate or ethanol, the activity of IDH declines drastically concomitant with its phosphorylation. This Escherichia coli O157:H7 protein is Isocitrate dehydrogenase kinase/phosphatase.